The chain runs to 275 residues: tRNA pseudouridine synthase A (275 aa).

The active-site Nucleophile is the Asp56. Residue Tyr114 coordinates substrate.

Belongs to the tRNA pseudouridine synthase TruA family. As to quaternary structure, homodimer.

The enzyme catalyses uridine(38/39/40) in tRNA = pseudouridine(38/39/40) in tRNA. In terms of biological role, formation of pseudouridine at positions 38, 39 and 40 in the anticodon stem and loop of transfer RNAs. The polypeptide is tRNA pseudouridine synthase A (Polynucleobacter asymbioticus (strain DSM 18221 / CIP 109841 / QLW-P1DMWA-1) (Polynucleobacter necessarius subsp. asymbioticus)).